Here is a 279-residue protein sequence, read N- to C-terminus: Tryptophan synthase alpha chain (279 aa).

Catalysis depends on proton acceptor residues Glu-50 and Asp-61.

It belongs to the TrpA family. In terms of assembly, tetramer of two alpha and two beta chains.

The enzyme catalyses (1S,2R)-1-C-(indol-3-yl)glycerol 3-phosphate + L-serine = D-glyceraldehyde 3-phosphate + L-tryptophan + H2O. Its pathway is amino-acid biosynthesis; L-tryptophan biosynthesis; L-tryptophan from chorismate: step 5/5. Its function is as follows. The alpha subunit is responsible for the aldol cleavage of indoleglycerol phosphate to indole and glyceraldehyde 3-phosphate. In Brucella ovis (strain ATCC 25840 / 63/290 / NCTC 10512), this protein is Tryptophan synthase alpha chain.